The primary structure comprises 88 residues: HssA/B-like protein 9 (88 aa).

Residues methionine 1–methionine 14 are compositionally biased toward polar residues. The tract at residues methionine 1–glycine 26 is disordered.

Belongs to the hssA/B family.

The polypeptide is HssA/B-like protein 9 (hssl9) (Dictyostelium discoideum (Social amoeba)).